Consider the following 239-residue polypeptide: Orotidine 5'-phosphate decarboxylase (239 aa).

Residues aspartate 11, lysine 33, 60–69 (DLKFHDIPTT), threonine 117, arginine 178, glutamine 187, glycine 207, and arginine 208 each bind substrate. Residue lysine 62 is the Proton donor of the active site.

Belongs to the OMP decarboxylase family. Type 1 subfamily. Homodimer.

It carries out the reaction orotidine 5'-phosphate + H(+) = UMP + CO2. It participates in pyrimidine metabolism; UMP biosynthesis via de novo pathway; UMP from orotate: step 2/2. Functionally, catalyzes the decarboxylation of orotidine 5'-monophosphate (OMP) to uridine 5'-monophosphate (UMP). This is Orotidine 5'-phosphate decarboxylase from Nitrosospira multiformis (strain ATCC 25196 / NCIMB 11849 / C 71).